Here is a 348-residue protein sequence, read N- to C-terminus: MSDRLTLLRPDDWHIHLRDGAALANTVGDAARTFGRAIVMPNLVPPVRNAAEADAYRQRILAARPAASRFEPLMVLYLTDRTSAEEIRTAKASGFVHAAKLYPAGATTNSDSGVTRIDNIFEALEAMAEVGMPLLVHGEVTRAEVDVFDREKQFIDEHLRRVVERFPTLKVVFEHITTGDAAQFVREAPANVGATITAHHLLYNRNHMLVGGIRPHFYCLPILKRNTHQEALLDAAVSGNPKFFLGTDSAPHARHAKETACGCAGCYSAYAAIELYAEAFEQRNALDKLEGFASLHGPDFYGLPRNTDRITLVREEWQAPASLPFGDFDVVPLRAGETLRWKLLEAGA.

Residues His-14 and His-16 each coordinate Zn(2+). Substrate-binding positions include 16-18 and Asn-42; that span reads HLR. Positions 100, 137, and 175 each coordinate Zn(2+). Lys-100 carries the N6-carboxylysine modification. Residue His-137 coordinates substrate. Residue Leu-220 participates in substrate binding. Residue Asp-248 participates in Zn(2+) binding. Asp-248 is an active-site residue. Substrate contacts are provided by His-252 and Ala-264.

Belongs to the metallo-dependent hydrolases superfamily. DHOase family. Class II DHOase subfamily. As to quaternary structure, homodimer. Requires Zn(2+) as cofactor.

It carries out the reaction (S)-dihydroorotate + H2O = N-carbamoyl-L-aspartate + H(+). The protein operates within pyrimidine metabolism; UMP biosynthesis via de novo pathway; (S)-dihydroorotate from bicarbonate: step 3/3. Catalyzes the reversible cyclization of carbamoyl aspartate to dihydroorotate. The protein is Dihydroorotase of Pseudomonas aeruginosa (strain UCBPP-PA14).